A 170-amino-acid polypeptide reads, in one-letter code: Small ribosomal subunit protein uS5 (170 aa).

An S5 DRBM domain is found at 13–76 (LTEKLIGVNR…DQARRSMVKI (64 aa)).

Belongs to the universal ribosomal protein uS5 family. Part of the 30S ribosomal subunit. Contacts proteins S4 and S8.

Its function is as follows. With S4 and S12 plays an important role in translational accuracy. Functionally, located at the back of the 30S subunit body where it stabilizes the conformation of the head with respect to the body. In Laribacter hongkongensis (strain HLHK9), this protein is Small ribosomal subunit protein uS5.